We begin with the raw amino-acid sequence, 562 residues long: Arginine--tRNA ligase (562 aa).

Residues 129-139 (ANPTGPLHVGH) carry the 'HIGH' region motif.

It belongs to the class-I aminoacyl-tRNA synthetase family. Monomer.

It localises to the cytoplasm. The catalysed reaction is tRNA(Arg) + L-arginine + ATP = L-arginyl-tRNA(Arg) + AMP + diphosphate. This chain is Arginine--tRNA ligase (argS), found in Xylella fastidiosa (strain 9a5c).